The sequence spans 374 residues: Chaperone protein DnaJ (374 aa).

In terms of domain architecture, J spans C5–G70. The CR-type zinc-finger motif lies at G130–Q207. Zn(2+) is bound by residues C143, C146, C159, C162, C181, C184, C195, and C198. 4 CXXCXGXG motif repeats span residues C143 to G150, C159 to G166, C181 to G188, and C195 to G202.

This sequence belongs to the DnaJ family. Homodimer. It depends on Zn(2+) as a cofactor.

The protein localises to the cytoplasm. Its function is as follows. Participates actively in the response to hyperosmotic and heat shock by preventing the aggregation of stress-denatured proteins and by disaggregating proteins, also in an autonomous, DnaK-independent fashion. Unfolded proteins bind initially to DnaJ; upon interaction with the DnaJ-bound protein, DnaK hydrolyzes its bound ATP, resulting in the formation of a stable complex. GrpE releases ADP from DnaK; ATP binding to DnaK triggers the release of the substrate protein, thus completing the reaction cycle. Several rounds of ATP-dependent interactions between DnaJ, DnaK and GrpE are required for fully efficient folding. Also involved, together with DnaK and GrpE, in the DNA replication of plasmids through activation of initiation proteins. This Francisella philomiragia subsp. philomiragia (strain ATCC 25017 / CCUG 19701 / FSC 153 / O#319-036) protein is Chaperone protein DnaJ.